A 408-amino-acid polypeptide reads, in one-letter code: Endo-1,4-beta-xylanase A (408 aa).

Positions 1–19 are cleaved as a signal peptide; that stretch reads MKLSASFAALALLLPFVQA. The CBM1 domain maps to 20–55; sequence QSPVWGQCGGIGWTGPTTCTAGNVCQEYSAYYSQCI. Residues 64–89 form a disordered region; sequence TSVSTAPNPPPTSHTSTSSAPSGAST. Positions 76 to 89 are enriched in low complexity; that stretch reads SHTSTSSAPSGAST. One can recognise a GH10 domain in the interval 88 to 405; that stretch reads STSTAKLNTL…KPAYDGIAIG (318 aa). Residue Glu-222 is the Proton donor of the active site. Glu-327 functions as the Nucleophile in the catalytic mechanism. Cys-355 and Cys-361 are oxidised to a cystine.

This sequence belongs to the glycosyl hydrolase 10 (cellulase F) family.

It is found in the secreted. The enzyme catalyses Endohydrolysis of (1-&gt;4)-beta-D-xylosidic linkages in xylans.. It participates in glycan degradation; xylan degradation. Functionally, endo-1,4-beta-xylanase involved in the hydrolysis of xylan, a major structural heterogeneous polysaccharide found in plant biomass representing the second most abundant polysaccharide in the biosphere, after cellulose. In Phanerodontia chrysosporium (White-rot fungus), this protein is Endo-1,4-beta-xylanase A (xynA).